Here is a 162-residue protein sequence, read N- to C-terminus: Large ribosomal subunit protein uL10 (162 aa).

This sequence belongs to the universal ribosomal protein uL10 family. As to quaternary structure, part of the ribosomal stalk of the 50S ribosomal subunit. The N-terminus interacts with L11 and the large rRNA to form the base of the stalk. The C-terminus forms an elongated spine to which L12 dimers bind in a sequential fashion forming a multimeric L10(L12)X complex.

Its function is as follows. Forms part of the ribosomal stalk, playing a central role in the interaction of the ribosome with GTP-bound translation factors. This Borreliella burgdorferi (strain ATCC 35210 / DSM 4680 / CIP 102532 / B31) (Borrelia burgdorferi) protein is Large ribosomal subunit protein uL10 (rplJ).